Reading from the N-terminus, the 417-residue chain is NADH-quinone oxidoreductase subunit D (417 aa).

Belongs to the complex I 49 kDa subunit family. NDH-1 is composed of 14 different subunits. Subunits NuoB, C, D, E, F, and G constitute the peripheral sector of the complex.

It is found in the cell inner membrane. It catalyses the reaction a quinone + NADH + 5 H(+)(in) = a quinol + NAD(+) + 4 H(+)(out). Its function is as follows. NDH-1 shuttles electrons from NADH, via FMN and iron-sulfur (Fe-S) centers, to quinones in the respiratory chain. The immediate electron acceptor for the enzyme in this species is believed to be ubiquinone. Couples the redox reaction to proton translocation (for every two electrons transferred, four hydrogen ions are translocated across the cytoplasmic membrane), and thus conserves the redox energy in a proton gradient. This Ralstonia pickettii (strain 12J) protein is NADH-quinone oxidoreductase subunit D.